The chain runs to 169 residues: Lachrymatory-factor synthase (169 aa).

Residues 1 to 12 (MELNPGAPAVVA) constitute a propeptide that is removed on maturation. Active-site proton donor/acceptor residues include glutamate 88 and tyrosine 102.

It localises to the vacuole. It catalyses the reaction (E)-prop-1-en-1-SO-peroxol = (Z)-propanethial S-oxide. The enzyme catalyses (E)-alk-1-en-1-SO-peroxol = (Z)-alkanethial oxide. Produces lacrymatory factor (propanthial S-oxide) from 1-propenylsulphenic acid, an unstable compound resulting from the degradation of trans-1-propenyl-L-cysteine sulphoxide (PRENCSO) by alliinase. The chain is Lachrymatory-factor synthase from Allium cepa (Onion).